Reading from the N-terminus, the 289-residue chain is uncharacterized protein (289 aa).

A signal peptide spans 1-19 (MAKWLGAPLARGVSTATRA). 2 consecutive transmembrane segments (helical) span residues 90 to 110 (GLLAAAFVASVLLGVGIGWGV) and 257 to 277 (AALSLSLYVSSDYGGGYLVFA).

It is found in the cell membrane. This is an uncharacterized protein from Mycobacterium tuberculosis (strain ATCC 25618 / H37Rv).